Reading from the N-terminus, the 93-residue chain is Large ribosomal subunit protein bL27 (93 aa).

The propeptide occupies 1–8; the sequence is MIMDLQFF. Residues 8–29 form a disordered region; sequence FSHHKGGGSTANGRNSAGRRLG.

Belongs to the bacterial ribosomal protein bL27 family. Post-translationally, the N-terminus is cleaved by ribosomal processing cysteine protease Prp.

This chain is Large ribosomal subunit protein bL27, found in Limosilactobacillus reuteri (strain DSM 20016) (Lactobacillus reuteri).